The chain runs to 189 residues: ECF RNA polymerase sigma-E factor (189 aa).

A binds RNAP core region spans residues 1–153 (MAEQLTDQAL…TAITLRELEG (153 aa)). The interval 25-92 (LVSRYQNKVA…KNYLTAQGRR (68 aa)) is sigma-70 factor domain-2. Positions 48 to 61 (DVVQESFIKAYRSI) match the Polymerase core binding motif. The interval 129 to 180 (RIVFDTIHNLPEDLKTAITLRELEGLSYEDIAEIMDCPVGTVRSRIFRAREM) is sigma-70 factor domain-4. A DNA-binding region (H-T-H motif) is located at residues 156–175 (YEDIAEIMDCPVGTVRSRIF).

The protein belongs to the sigma-70 factor family. ECF subfamily. Interacts transiently with the RNAP catalytic core formed by RpoA, RpoB, RpoC and RpoZ (2 alpha, 1 beta, 1 beta' and 1 omega subunit) to form the RNAP holoenzyme that can initiate transcription. Interacts 1:1 with anti-sigma-E factor RseA which prevents binding to RNAP catalytic core.

It is found in the cytoplasm. Its activity is regulated as follows. ECF sigma-E is held in an inactive form by its cognate anti-sigma factor (RseA) until released by regulated intramembrane proteolysis (RIP). RIP occurs when an extracytoplasmic signal (periplasmic stress and excess LPS) triggers a concerted proteolytic cascade to transmit information and elicit cellular responses. The anti-sigma factor RseA is an inner membrane protein, binding sigma-E in the cytoplasm and RseB in the periplasm. RseA is first cut extracytoplasmically (site-1 protease, S1P, by DegS), then within the membrane itself (site-2 protease, S2P, by RseP), while cytoplasmic proteases (predominantly ClpX-ClpP) finish degrading the regulatory protein, liberating sigma-E. Degradation of RseA requires 2 signals to activate DegS; an outer membrane protein (OMP) signal activates DegS, while an LPS signal causes release of RseB from RseA, freeing RseA to be cleaved. In terms of biological role, sigma factors are initiation factors that promote the attachment of RNA polymerase (RNAP) to specific initiation sites and are then released. Extracytoplasmic function (ECF) sigma-E controls the envelope stress response, responding to periplasmic protein stress, increased levels of periplasmic lipopolysaccharide (LPS) as well as heat shock and oxidative stress; it controls protein processing in the extracytoplasmic compartment. The chain is ECF RNA polymerase sigma-E factor (rpoE) from Haemophilus influenzae (strain ATCC 51907 / DSM 11121 / KW20 / Rd).